The following is a 289-amino-acid chain: Syntaxin-3 (289 aa).

Over 1–263 (MKDRLEQLKA…VKYQSQARKK (263 aa)) the chain is Cytoplasmic. Residues 32–111 (MDEFFSEIEE…IEEDEVRSSA (80 aa)) adopt a coiled-coil conformation. Residues 191–253 (LSEIEGRHKD…EKARDETKKA (63 aa)) form the t-SNARE coiled-coil homology domain. The helical; Anchor for type IV membrane protein transmembrane segment at 264–284 (LIIIIVLVVVLLGILALIIGL) threads the bilayer. Residues 285 to 289 (SVGLN) lie on the Extracellular side of the membrane.

The protein belongs to the syntaxin family. In terms of assembly, interacts with REEP6. Interacts with PRPH2 in rod and cone photoreceptors. Interacts with ROM1. Interacts with SNAP25. Interacts with VAMP2. Interacts with IPO5. As to expression, expressed in small intestine, kidney, pancreas, placenta as well as in retina. Weaker expression in lung, liver and heart. Not expressed in brain and skeletal muscle. In terms of tissue distribution, expressed only in the retina. Ubiquitously expressed.

The protein localises to the apical cell membrane. The protein resides in the nucleus. Potentially involved in docking of synaptic vesicles at presynaptic active zones. Apical receptor involved in membrane fusion of apical vesicles. Its function is as follows. Essential for survival of retinal photoreceetors. In terms of biological role, functions as a regulator of gene expression. The chain is Syntaxin-3 (STX3) from Homo sapiens (Human).